The sequence spans 153 residues: UPF0127 protein TGAM_1372 (153 aa).

The protein belongs to the UPF0127 family.

The sequence is that of UPF0127 protein TGAM_1372 from Thermococcus gammatolerans (strain DSM 15229 / JCM 11827 / EJ3).